The sequence spans 443 residues: Probable lipase C16A3.12c (443 aa).

Residues 1–16 (MSGFNKNQIYWGDYVG) lie on the Cytoplasmic side of the membrane. Residues 17–37 (VIAAFVGVYTELVARIFIYMI) traverse the membrane as a helical; Signal-anchor for type II membrane protein segment. The Lumenal segment spans residues 38–443 (PERVREWFRV…KHFVKQNGFH (406 aa)). Residues 116-410 (VVYCHHGLMT…HYEHLDFLWG (295 aa)) form the AB hydrolase-1 domain. N-linked (GlcNAc...) asparagine glycosylation is found at Asn134 and Asn177. Ser210 functions as the Nucleophile in the catalytic mechanism. 2 N-linked (GlcNAc...) asparagine glycosylation sites follow: Asn304 and Asn335. Catalysis depends on charge relay system residues Asp378 and His404.

It belongs to the AB hydrolase superfamily. Lipase family.

It localises to the cytoplasm. It is found in the vacuole. Its subcellular location is the membrane. In terms of biological role, probable lipase. The protein is Probable lipase C16A3.12c of Schizosaccharomyces pombe (strain 972 / ATCC 24843) (Fission yeast).